Consider the following 271-residue polypeptide: MTGWIVLPISLTAFSIPGIWIVYAMAVMNHHVCPVENWTYNLTCTDDNTKAGTPKSCCTLEDVPLISKCGTYPPESCLFSLIGNVGAFMVVIICLLRYSQVIEISQRSWLNTTALIAGCTNAAGLVMVGNFQVDYAKSLHYIGAGVAFPAGLLFVCLSSILSYQLAASALDYWLGHLRVSLTIVALISLVLTGVFFIQESFLMQHLVAICEWIFVLDILVFYGTFAYEFGSVSTDTMMAALQSSAARSCKSPGSSSTSTQLHCNAERIAMI.

At 1–3 the chain is on the cytoplasmic side; it reads MTG. The helical transmembrane segment at 4 to 24 threads the bilayer; sequence WIVLPISLTAFSIPGIWIVYA. Residues 25–75 are Extracellular-facing; that stretch reads MAVMNHHVCPVENWTYNLTCTDDNTKAGTPKSCCTLEDVPLISKCGTYPPE. Asparagine 37 and asparagine 41 each carry an N-linked (GlcNAc...) asparagine glycan. The helical transmembrane segment at 76 to 96 threads the bilayer; it reads SCLFSLIGNVGAFMVVIICLL. At 97–108 the chain is on the cytoplasmic side; sequence RYSQVIEISQRS. The helical transmembrane segment at 109-129 threads the bilayer; sequence WLNTTALIAGCTNAAGLVMVG. Over 130–140 the chain is Extracellular; the sequence is NFQVDYAKSLH. A helical membrane pass occupies residues 141-161; sequence YIGAGVAFPAGLLFVCLSSIL. At 162-182 the chain is on the cytoplasmic side; the sequence is SYQLAASALDYWLGHLRVSLT. The helical transmembrane segment at 183–203 threads the bilayer; the sequence is IVALISLVLTGVFFIQESFLM. The Extracellular portion of the chain corresponds to 204-205; the sequence is QH. A helical membrane pass occupies residues 206 to 226; that stretch reads LVAICEWIFVLDILVFYGTFA. Residues 227–271 are Cytoplasmic-facing; that stretch reads YEFGSVSTDTMMAALQSSAARSCKSPGSSSTSTQLHCNAERIAMI.

The protein belongs to the DRAM/TMEM150 family.

Its subcellular location is the cell membrane. In terms of biological role, regulates localization of phosphatidylinositol 4-kinase (PI4K) to the plasma membrane. The protein is Transmembrane protein 150A (tmem150a) of Xenopus laevis (African clawed frog).